Here is a 360-residue protein sequence, read N- to C-terminus: 3-dehydroquinate synthase (360 aa).

NAD(+) contacts are provided by residues 105 to 109 (GVVGD), 129 to 130 (TT), K142, K151, and 169 to 172 (TLKT). Positions 184, 247, and 263 each coordinate Zn(2+).

This sequence belongs to the sugar phosphate cyclases superfamily. Dehydroquinate synthase family. Requires Co(2+) as cofactor. It depends on Zn(2+) as a cofactor. NAD(+) serves as cofactor.

Its subcellular location is the cytoplasm. It catalyses the reaction 7-phospho-2-dehydro-3-deoxy-D-arabino-heptonate = 3-dehydroquinate + phosphate. The protein operates within metabolic intermediate biosynthesis; chorismate biosynthesis; chorismate from D-erythrose 4-phosphate and phosphoenolpyruvate: step 2/7. In terms of biological role, catalyzes the conversion of 3-deoxy-D-arabino-heptulosonate 7-phosphate (DAHP) to dehydroquinate (DHQ). This chain is 3-dehydroquinate synthase, found in Acetivibrio thermocellus (strain ATCC 27405 / DSM 1237 / JCM 9322 / NBRC 103400 / NCIMB 10682 / NRRL B-4536 / VPI 7372) (Clostridium thermocellum).